A 231-amino-acid chain; its full sequence is Thiamine import ATP-binding protein ThiQ (231 aa).

The region spanning 2 to 230 (LHLDRLLIRQ…PPPALRAYLG (229 aa)) is the ABC transporter domain. 32 to 39 (GPSGGGKS) contacts ATP.

This sequence belongs to the ABC transporter superfamily. Thiamine importer (TC 3.A.1.19.1) family. As to quaternary structure, the complex is composed of two ATP-binding proteins (ThiQ), two transmembrane proteins (ThiP) and a solute-binding protein (ThiB).

The protein localises to the cell inner membrane. The catalysed reaction is thiamine(out) + ATP + H2O = thiamine(in) + ADP + phosphate + H(+). Part of the ABC transporter complex ThiBPQ involved in thiamine import. Responsible for energy coupling to the transport system. This Cereibacter sphaeroides (strain ATCC 17023 / DSM 158 / JCM 6121 / CCUG 31486 / LMG 2827 / NBRC 12203 / NCIMB 8253 / ATH 2.4.1.) (Rhodobacter sphaeroides) protein is Thiamine import ATP-binding protein ThiQ.